Reading from the N-terminus, the 258-residue chain is MNKPLLSELIIDIGNTSIAFASFKDNKINLFVKMKTNLMLRHDEVFSFFKENFDFNVNQVFISSVVPILNGIFENVIFSFFKIKPLFISFDLNYDLTFNPYKSGKFLLGSDVFANLVAAIENYSFENVLVVDLGTACTIFAVSRQDGILGGLINSGPLINFNSLLDNAYLLKKFSISTPSNLLERTTSGSVNSGLFYQYKYLIEGVYRDIKKMYKKEFNLIIAGGNANLLLPLIEIEFIFNIHLTVEGIRILGNSIVF.

An ATP-binding site is contributed by Asp12 to Ala19. Residues Tyr94 and Gly109–Val112 contribute to the substrate site. Asp111 functions as the Proton acceptor in the catalytic mechanism. Asp132 serves as a coordination point for K(+). Thr135 contributes to the ATP binding site. Thr187 is a substrate binding site.

It belongs to the type III pantothenate kinase family. As to quaternary structure, homodimer. The cofactor is NH4(+). K(+) is required as a cofactor.

It is found in the cytoplasm. It carries out the reaction (R)-pantothenate + ATP = (R)-4'-phosphopantothenate + ADP + H(+). Its pathway is cofactor biosynthesis; coenzyme A biosynthesis; CoA from (R)-pantothenate: step 1/5. Catalyzes the phosphorylation of pantothenate (Pan), the first step in CoA biosynthesis. In Borreliella afzelii (strain PKo) (Borrelia afzelii), this protein is Type III pantothenate kinase.